A 142-amino-acid chain; its full sequence is Transcriptional regulator MraZ (142 aa).

2 SpoVT-AbrB domains span residues 5-47 and 76-119; these read EYNH…PLGE and ANEV…SKEK.

Belongs to the MraZ family. In terms of assembly, forms oligomers.

The protein resides in the cytoplasm. It is found in the nucleoid. This chain is Transcriptional regulator MraZ, found in Clostridium acetobutylicum (strain ATCC 824 / DSM 792 / JCM 1419 / IAM 19013 / LMG 5710 / NBRC 13948 / NRRL B-527 / VKM B-1787 / 2291 / W).